We begin with the raw amino-acid sequence, 138 residues long: Ribosome-binding factor A (138 aa).

This sequence belongs to the RbfA family. Monomer. Binds 30S ribosomal subunits, but not 50S ribosomal subunits or 70S ribosomes.

It localises to the cytoplasm. Its function is as follows. One of several proteins that assist in the late maturation steps of the functional core of the 30S ribosomal subunit. Associates with free 30S ribosomal subunits (but not with 30S subunits that are part of 70S ribosomes or polysomes). Required for efficient processing of 16S rRNA. May interact with the 5'-terminal helix region of 16S rRNA. In Sodalis glossinidius (strain morsitans), this protein is Ribosome-binding factor A.